We begin with the raw amino-acid sequence, 159 residues long: ATP-dependent Clp protease adapter protein CLPS1, chloroplastic (159 aa).

Residues 1 to 44 (METAICGRLALAPSSLFNSKSGDKHLVSKGPCVNRSILMTLSTS) constitute a chloroplast transit peptide.

The protein belongs to the ClpS family. Interacts with CLPC1 (via N-terminus) and CLPC2, but not with CLPt1 or CLPT2. Binds to ClpF; this interaction stimulates their association with ClpC. In terms of tissue distribution, expressed exclusively in photosynthetic green tissues with high levels in young, developing leaf tissues.

Its subcellular location is the plastid. It localises to the chloroplast stroma. In terms of biological role, small adapter protein that modulate the activity of CLPC. Involved in plastid biogenesis in particular when chloroplast protein synthesis capacity is a limiting factor. Probably involved in substrate selection for plastid Clp protease system. Recruitment to ClpC chaperones is facilitated by CLPF thus forming a binary adapter for selective substrate recognition and delivery to plastid Clp protease system (CLPC). In Arabidopsis thaliana (Mouse-ear cress), this protein is ATP-dependent Clp protease adapter protein CLPS1, chloroplastic.